A 295-amino-acid chain; its full sequence is Methionine aminopeptidase (295 aa).

Substrate is bound at residue H62. D82, D93, and H153 together coordinate a divalent metal cation. H161 provides a ligand contact to substrate. A divalent metal cation is bound by residues E187 and E280.

The protein belongs to the peptidase M24A family. Methionine aminopeptidase archaeal type 2 subfamily. In terms of assembly, monomer. Requires Co(2+) as cofactor. The cofactor is Zn(2+). Mn(2+) serves as cofactor. It depends on Fe(2+) as a cofactor.

It catalyses the reaction Release of N-terminal amino acids, preferentially methionine, from peptides and arylamides.. Removes the N-terminal methionine from nascent proteins. The N-terminal methionine is often cleaved when the second residue in the primary sequence is small and uncharged (Met-Ala-, Cys, Gly, Pro, Ser, Thr, or Val). This is Methionine aminopeptidase from Pyrococcus abyssi (strain GE5 / Orsay).